The primary structure comprises 382 residues: F-box/kelch-repeat protein KIB1 (382 aa).

Positions 22–69 (SKHSILAVDLVRLILERLSFVDFHRARCVSSIWYIASKTVIGVTNPTT) constitute an F-box domain. 3 Kelch repeats span residues 73-117 (ILFP…ASSG), 159-209 (VLWV…FKEN), and 259-306 (IVAK…ITVE).

Part of a SCF (SKP1-cullin-F-box) protein ligase complex. Binds directly to several GSK3 family proteins such as SKP1A/ASK1, ASK1/SK11, ASK3/SK12, ASK5/SK13, ASK7/BIN2/SK21, ASK9/SK22 and ASK6/SK23. Interacts with ASK7/BIN2/SK21 in a brassinosteroid (BR)-dependent manner. Expressed in seedlings, leaves, stems, flower buds and flowers.

Its subcellular location is the cytoplasm. The protein localises to the nucleus. The protein resides in the nucleolus. Its function is as follows. Component of SCF(ASK-cullin-F-box) E3 ubiquitin ligase complexes, which may mediate the ubiquitination and subsequent proteasomal degradation of target proteins. Required for brassinosteroid (BR) signal transduction. Mediates ASK7/BIN2/SK21 inactivation both by competing with substrate binding (e.g. BZR1) and by promoting its ubiquitination and subsequent proteasomal degradation. This Arabidopsis thaliana (Mouse-ear cress) protein is F-box/kelch-repeat protein KIB1.